Consider the following 193-residue polypeptide: uncharacterized protein (193 aa).

Transmembrane regions (helical) follow at residues 40 to 56 (LYIA…LKLI), 63 to 79 (AAGL…SSLC), 86 to 110 (CSGY…IVSC), and 117 to 138 (FIFP…FQIY). Residues 158-193 (TTTKLSRSSSAPDLSCPSLSTQPTSPNQSLSAYKKY) are disordered.

It belongs to the chlamydial CPn_0442/CT_006/TC_0274 family.

The protein resides in the cell membrane. This is an uncharacterized protein from Chlamydia muridarum (strain MoPn / Nigg).